The following is a 234-amino-acid chain: Orotate phosphoribosyltransferase (234 aa).

Lys-30 is a binding site for 5-phospho-alpha-D-ribose 1-diphosphate. 38–39 (FF) lines the orotate pocket. 5-phospho-alpha-D-ribose 1-diphosphate contacts are provided by residues 76–77 (YK), Arg-103, Lys-104, Lys-107, His-109, and 128–136 (DDVITAGTA). Orotate-binding residues include Thr-132 and Arg-160.

The protein belongs to the purine/pyrimidine phosphoribosyltransferase family. PyrE subfamily. Homodimer. Mg(2+) serves as cofactor.

The enzyme catalyses orotidine 5'-phosphate + diphosphate = orotate + 5-phospho-alpha-D-ribose 1-diphosphate. Its pathway is pyrimidine metabolism; UMP biosynthesis via de novo pathway; UMP from orotate: step 1/2. In terms of biological role, catalyzes the transfer of a ribosyl phosphate group from 5-phosphoribose 1-diphosphate to orotate, leading to the formation of orotidine monophosphate (OMP). This Chromohalobacter salexigens (strain ATCC BAA-138 / DSM 3043 / CIP 106854 / NCIMB 13768 / 1H11) protein is Orotate phosphoribosyltransferase.